Reading from the N-terminus, the 66-residue chain is Protein I177L (66 aa).

N11 carries an N-linked (GlcNAc...) asparagine; by host glycan.

This sequence belongs to the asfivirus I177L family.

Its subcellular location is the virion. This is Protein I177L from Ornithodoros (relapsing fever ticks).